The chain runs to 63 residues: Large ribosomal subunit protein bL28 (63 aa).

A disordered region spans residues 1-22 (MSRRCAITGKSAMNGHSVSHAN).

Belongs to the bacterial ribosomal protein bL28 family.

The sequence is that of Large ribosomal subunit protein bL28 from Campylobacter hominis (strain ATCC BAA-381 / DSM 21671 / CCUG 45161 / LMG 19568 / NCTC 13146 / CH001A).